A 249-amino-acid chain; its full sequence is Type III pantothenate kinase (249 aa).

6-13 contacts ATP; sequence DIGNSRTK. Substrate is bound by residues Y89 and 96–99; that span reads GIDR. The active-site Proton acceptor is the D98. D119 provides a ligand contact to K(+). T122 is an ATP binding site. T174 provides a ligand contact to substrate.

Belongs to the type III pantothenate kinase family. In terms of assembly, homodimer. It depends on NH4(+) as a cofactor. K(+) serves as cofactor.

It localises to the cytoplasm. The enzyme catalyses (R)-pantothenate + ATP = (R)-4'-phosphopantothenate + ADP + H(+). The protein operates within cofactor biosynthesis; coenzyme A biosynthesis; CoA from (R)-pantothenate: step 1/5. Functionally, catalyzes the phosphorylation of pantothenate (Pan), the first step in CoA biosynthesis. This is Type III pantothenate kinase from Colwellia psychrerythraea (strain 34H / ATCC BAA-681) (Vibrio psychroerythus).